Here is a 739-residue protein sequence, read N- to C-terminus: Nucleoprotein (739 aa).

Residues 334 to 363 (VNVGEQYQQLREAATEAEKQLQQYAESREL) are a coiled coil. Positions 415 to 646 (PKTSGHYDDD…QDSDNTQPEH (232 aa)) are disordered. 2 stretches are compositionally biased toward low complexity: residues 449-458 (SQDTTIPDVV) and 504-514 (KGGQQKNSQKG). The span at 520–530 (RQTQSRPTQNI) shows a compositional bias: polar residues. Over residues 567–579 (EEADPLDDADDET) the composition is skewed to acidic residues. Residues 611-638 (YRDHSEKKELPQDERQDQDHTQEARNQD) are compositionally biased toward basic and acidic residues.

It belongs to the filoviruses nucleoprotein family. Homooligomer. Homomultimerizes to form the nucleocapsid. Binds to viral genomic RNA. Interacts with VP35 and VP30 to form the nucleocapsid. Interacts with host PPP2R5C; this interaction leads to VP30 dephosphorylation and viral transcription. Interacts with VP24; this interaction facilitates nucleocapsid assembly and genome packaging. Interacts with matrix protein VP40; this interaction allows recruitment of the nucleocapsid into progeny virions. Interacts with host STAU1. Interacts with host NXF1 (via RNA-binding domain); this interaction recruits NXF1 to the inclusion bodies were viral replication takes place, probably to export viral mRNA-NXF1 complexes from these sites. Interacts with host CCDC92; this interaction sequesters NP in the host cytoplasm. Interacts with host TRIM14. Post-translationally, phosphorylated and O-glycosylated by host. Acetylated by host EP300 in vitro.

It localises to the virion. The protein resides in the host cytoplasm. Oligomerizes into helical capsid to encapsidate the viral genome, protecting it from nucleases and the cellular innate immune response. VP35 binds to and stabilizes monomeric NP, keeping it soluble. Upon virus replication, NP is recruited to bind cooperatively viral genomic RNA and VP35 is released. The encapsidated genomic RNA is termed the nucleocapsid and serves as template for transcription and replication. The nucleocapsid is helical with a pitch of 10.81 NP per turn and a diameter of about 22nm. Each NP binds to six nucleotides of viral genomic RNA, three being exposed to the solvant and three hidden into the nucleocapsid. Also recruits host PPP2R5C phosphatase to dephosphorylate VP30 and thereby promote viral transcription. Upon virion assembly and budding, NP binds to VP24 and possibly host STAU1. The polypeptide is Nucleoprotein (NP) (Zaire ebolavirus (strain Gabon-94) (ZEBOV)).